We begin with the raw amino-acid sequence, 356 residues long: Cytochrome b translation regulator cbp7 (356 aa).

In terms of assembly, component of a complex, at least composed of cbp7 and cbp8.

The protein resides in the mitochondrion. In terms of biological role, translation factor for cob1/cytochrome b; plays a role in cob1 mRNA stabilization and required for correct folding of the protein. In Schizosaccharomyces pombe (strain 972 / ATCC 24843) (Fission yeast), this protein is Cytochrome b translation regulator cbp7.